The chain runs to 150 residues: UPF0756 membrane protein HI_1074 (150 aa).

Transmembrane regions (helical) follow at residues 1-21 (MTLQ…LGVL), 52-72 (YGVK…LVSG), 81-101 (GFLS…AWLA), and 123-143 (IIGV…AGIL).

Belongs to the UPF0756 family.

The protein resides in the cell membrane. This chain is UPF0756 membrane protein HI_1074, found in Haemophilus influenzae (strain ATCC 51907 / DSM 11121 / KW20 / Rd).